Reading from the N-terminus, the 86-residue chain is MIOREX complex component 7 (86 aa).

In terms of assembly, associates with the mitochondrial ribosome.

It localises to the mitochondrion. In terms of biological role, component of MIOREX complexes, large expressome-like assemblies of ribosomes with factors involved in all the steps of post-transcriptional gene expression. This Saccharomyces cerevisiae (strain ATCC 204508 / S288c) (Baker's yeast) protein is MIOREX complex component 7.